Reading from the N-terminus, the 66-residue chain is Large ribosomal subunit protein bL33c (66 aa).

Belongs to the bacterial ribosomal protein bL33 family.

Its subcellular location is the plastid. The protein localises to the chloroplast. The polypeptide is Large ribosomal subunit protein bL33c (Phalaenopsis aphrodite subsp. formosana (Moth orchid)).